The primary structure comprises 360 residues: Glutaminyl-peptide cyclotransferase (360 aa).

An N-terminal signal peptide occupies residues 1-23 (MKYLKILIIVTIFFFLLINVINC). The N-linked (GlcNAc...) asparagine glycan is linked to Asn-135. Asp-165 serves as a coordination point for Zn(2+). The active-site Proton acceptor is the Glu-199. Position 200 (Glu-200) interacts with Zn(2+). Asp-251 acts as the Proton acceptor in catalysis. Zn(2+) is bound at residue His-330.

It belongs to the glutaminyl-peptide cyclotransferase family.

It is found in the secreted. It catalyses the reaction N-terminal L-glutaminyl-[peptide] = N-terminal 5-oxo-L-prolyl-[peptide] + NH4(+). Functionally, responsible for the biosynthesis of pyroglutamyl peptides. Has a bias against acidic and tryptophan residues adjacent to the N-terminal glutaminyl residue and a lack of importance of chain length after the second residue. Also catalyzes N-terminal pyroglutamate formation. This is Glutaminyl-peptide cyclotransferase (qpct) from Dictyostelium discoideum (Social amoeba).